Reading from the N-terminus, the 504-residue chain is Pentatricopeptide repeat-containing protein At1g05600 (504 aa).

PPR repeat units follow at residues 45 to 79, 80 to 114, 115 to 145, 151 to 185, 186 to 216, 225 to 259, 260 to 296, 297 to 331, 332 to 367, 368 to 398, 404 to 438, and 439 to 473; these read NGSVYATMIDILGKSNRVLEMKYVIERMKEDSCEC, KDSVFASVIRTFSRAGRLEDAISLFKSLHEFNCVN, WSLSFDTLLQEMVKESELEAACHIFRKYCYG, RITALNLLMKVLCQVNRSDLASQVFQEMNYQGCYP, DRDSYRILMKGFCLEGKLEEATHLLYSMFWR, DIVVYRILLDALCDAGEVDDAIEILGKILRKGLKA, PKRCYHHIEAGHWESSSEGIERVKRLLTETLIRGAIP, CLDSYSAMATDLFEEGKLVEGEEVLLAMRSKGFEP, TPFIYGAKVKALCRAGKLKEAVSVINKEMMQGHCLP, TVGVYNVLIKGLCDDGKSMEAVGYLKKMSKQ, NEETYQTLVDGLCRDGQFLEASQVMEEMLIKSHFP, and GVETYHMMIKGLCDMDRRYEAVMWLEEMVSQDMVP.

Belongs to the PPR family. P subfamily.

The chain is Pentatricopeptide repeat-containing protein At1g05600 from Arabidopsis thaliana (Mouse-ear cress).